The primary structure comprises 409 residues: Peptidase T (409 aa).

Zn(2+) is bound at residue His78. Asp80 is a catalytic residue. Asp140 serves as a coordination point for Zn(2+). Glu174 (proton acceptor) is an active-site residue. Residues Glu175, Asp197, and His379 each coordinate Zn(2+).

Belongs to the peptidase M20B family. It depends on Zn(2+) as a cofactor.

The protein localises to the cytoplasm. The enzyme catalyses Release of the N-terminal residue from a tripeptide.. Functionally, cleaves the N-terminal amino acid of tripeptides. This chain is Peptidase T, found in Aliivibrio fischeri (strain ATCC 700601 / ES114) (Vibrio fischeri).